Consider the following 567-residue polypeptide: Oxygen-dependent choline dehydrogenase (567 aa).

4-33 (DYIIIGAGSAGNVLAARLTEDADVTVLLLE) contacts FAD. The active-site Proton acceptor is His473.

Belongs to the GMC oxidoreductase family. FAD serves as cofactor.

The enzyme catalyses choline + A = betaine aldehyde + AH2. It catalyses the reaction betaine aldehyde + NAD(+) + H2O = glycine betaine + NADH + 2 H(+). It functions in the pathway amine and polyamine biosynthesis; betaine biosynthesis via choline pathway; betaine aldehyde from choline (cytochrome c reductase route): step 1/1. Functionally, involved in the biosynthesis of the osmoprotectant glycine betaine. Catalyzes the oxidation of choline to betaine aldehyde and betaine aldehyde to glycine betaine at the same rate. In Yersinia pestis (strain Pestoides F), this protein is Oxygen-dependent choline dehydrogenase.